The sequence spans 160 residues: SsrA-binding protein (160 aa).

A disordered region spans residues 135 to 160 (KTHDKRETIKERDWKREQSRILRDRG). Residues 138 to 160 (DKRETIKERDWKREQSRILRDRG) show a composition bias toward basic and acidic residues.

Belongs to the SmpB family.

It localises to the cytoplasm. Functionally, required for rescue of stalled ribosomes mediated by trans-translation. Binds to transfer-messenger RNA (tmRNA), required for stable association of tmRNA with ribosomes. tmRNA and SmpB together mimic tRNA shape, replacing the anticodon stem-loop with SmpB. tmRNA is encoded by the ssrA gene; the 2 termini fold to resemble tRNA(Ala) and it encodes a 'tag peptide', a short internal open reading frame. During trans-translation Ala-aminoacylated tmRNA acts like a tRNA, entering the A-site of stalled ribosomes, displacing the stalled mRNA. The ribosome then switches to translate the ORF on the tmRNA; the nascent peptide is terminated with the 'tag peptide' encoded by the tmRNA and targeted for degradation. The ribosome is freed to recommence translation, which seems to be the essential function of trans-translation. The chain is SsrA-binding protein from Sphingomonas elodea.